We begin with the raw amino-acid sequence, 615 residues long: Membrane protein insertase YidC (615 aa).

A run of 5 helical transmembrane segments spans residues 9–29 (LMFIVSAFAILIGYQFFVLGP), 384–404 (LVGNFGLAILLLTVVLKLVLY), 458–478 (LPMLIQIPVFYALYKVLTVTI), 516–536 (LIGAMIAHLGVWPLLYGFTMW), and 556–576 (WFPVIFTFTLSGFAVGLVIYW).

The protein belongs to the OXA1/ALB3/YidC family. Type 1 subfamily. As to quaternary structure, interacts with the Sec translocase complex via SecD. Specifically interacts with transmembrane segments of nascent integral membrane proteins during membrane integration.

The protein localises to the cell inner membrane. Required for the insertion and/or proper folding and/or complex formation of integral membrane proteins into the membrane. Involved in integration of membrane proteins that insert both dependently and independently of the Sec translocase complex, as well as at least some lipoproteins. Aids folding of multispanning membrane proteins. The polypeptide is Membrane protein insertase YidC (Caulobacter vibrioides (strain ATCC 19089 / CIP 103742 / CB 15) (Caulobacter crescentus)).